Reading from the N-terminus, the 114-residue chain is Superoxide dismutase [Cu-Zn] (114 aa).

Cu cation contacts are provided by His37, His39, and His54. The tract at residues 49-73 (MSSGPHYNPRNKEHGAPTDENRHLG) is disordered. Residues His54, His62, His71, and Asp74 each coordinate Zn(2+). A compositionally biased stretch (basic and acidic residues) spans 58-73 (RNKEHGAPTDENRHLG). His111 is a Cu cation binding site.

The protein belongs to the Cu-Zn superoxide dismutase family. As to quaternary structure, homodimer. Cu cation serves as cofactor. It depends on Zn(2+) as a cofactor.

The protein localises to the cytoplasm. It carries out the reaction 2 superoxide + 2 H(+) = H2O2 + O2. Destroys radicals which are normally produced within the cells and which are toxic to biological systems. The polypeptide is Superoxide dismutase [Cu-Zn] (Drosophila madeirensis (Fruit fly)).